We begin with the raw amino-acid sequence, 371 residues long: Aromatic peroxygenase (371 aa).

The first 18 residues, Met-1–Ala-18, serve as a signal peptide directing secretion. A propeptide spanning residues Phe-19 to Arg-43 is cleaved from the precursor. Residue Asn-54 is glycosylated (N-linked (GlcNAc...) asparagine). Cys-79 is a binding site for heme. Residues Asn-184, Asn-204, Asn-225, and Asn-329 are each glycosylated (N-linked (GlcNAc...) asparagine). Residues Cys-321 and Cys-362 are joined by a disulfide bond.

Belongs to the chloroperoxidase family. Heme b serves as cofactor. In terms of processing, N-glycosylated.

The catalysed reaction is RH + H2O2 = ROH + H2O.. Aromatic peroxidase that oxidizes aryl alcohols into the corresponding aldehydes and then into the corresponding benzoic acids. Oxidizes toluene and naphthalene. Catalyzes the regioselective peroxide-dependent hydroxylation of propranolol and diclofenac to 5-hydroxypropranolol and 4'-hydroxydiclofenac. Catalyzes the regioselective peroxide-dependent hydroxylation of naphthalene to 1-naphthol or 2-naphthol via a naphthalene 1,2-oxide intermediate. Catalyzes the regioselective peroxide-dependent oxidation of pyridine to pyridine N-oxide. Halogenates monochlorodimedone and phenol. Oxidizes the sulfur-containing heterocycle dibenzothiophene to yield ring-hydroxylation products and to a lesser extent sulfoxidation products. This chain is Aromatic peroxygenase, found in Cyclocybe aegerita (Black poplar mushroom).